Reading from the N-terminus, the 415-residue chain is rRNA methyltransferase 3, mitochondrial (415 aa).

The transit peptide at 1-47 (MAALCRGTVRACILKPLGLSVSLQVKRNVRALRRTPVRVLPAAEKGR) directs the protein to the mitochondrion. Positions 41 to 73 (PAAEKGRERKEVEARRPQQPRQSEYQTRTSQGV) are disordered. Positions 44–56 (EKGRERKEVEARR) are enriched in basic and acidic residues. A compositionally biased stretch (polar residues) spans 59 to 73 (QPRQSEYQTRTSQGV). Glycine 357, isoleucine 381, and leucine 390 together coordinate S-adenosyl-L-methionine.

Belongs to the class IV-like SAM-binding methyltransferase superfamily. RNA methyltransferase TrmH family.

The protein localises to the mitochondrion. It carries out the reaction a uridine in rRNA + S-adenosyl-L-methionine = a 2'-O-methyluridine in rRNA + S-adenosyl-L-homocysteine + H(+). S-adenosyl-L-methionine-dependent 2'-O-ribose methyltransferase that catalyzes the formation of 2'-O-methylguanosine at position 1370 (Gm1370) in the mitochondrial large subunit ribosomal RNA (mtLSU rRNA), a conserved modification in the peptidyl transferase domain of the mtLSU rRNA. Also required for formation of 2'-O-methyluridine at position 1369 (Um1369) mediated by MRM2. The protein is rRNA methyltransferase 3, mitochondrial of Xenopus tropicalis (Western clawed frog).